Reading from the N-terminus, the 161-residue chain is Putative pre-16S rRNA nuclease (161 aa).

This sequence belongs to the YqgF nuclease family.

The protein resides in the cytoplasm. Its function is as follows. Could be a nuclease involved in processing of the 5'-end of pre-16S rRNA. The chain is Putative pre-16S rRNA nuclease from Bartonella bacilliformis (strain ATCC 35685 / KC583 / Herrer 020/F12,63).